Consider the following 501-residue polypeptide: Glycerol kinase (501 aa).

Thr-17 contacts ADP. Residues Thr-17, Thr-18, and Ser-19 each contribute to the ATP site. Thr-17 serves as a coordination point for sn-glycerol 3-phosphate. Arg-21 serves as a coordination point for ADP. Sn-glycerol 3-phosphate contacts are provided by Arg-87, Glu-88, Tyr-139, and Asp-243. Glycerol is bound by residues Arg-87, Glu-88, Tyr-139, Asp-243, and Gln-244. Thr-265 and Gly-308 together coordinate ADP. The ATP site is built by Thr-265, Gly-308, Gln-312, and Gly-409. Residues Gly-409 and Asn-413 each contribute to the ADP site.

It belongs to the FGGY kinase family.

It carries out the reaction glycerol + ATP = sn-glycerol 3-phosphate + ADP + H(+). The protein operates within polyol metabolism; glycerol degradation via glycerol kinase pathway; sn-glycerol 3-phosphate from glycerol: step 1/1. Its activity is regulated as follows. Inhibited by fructose 1,6-bisphosphate (FBP). Key enzyme in the regulation of glycerol uptake and metabolism. Catalyzes the phosphorylation of glycerol to yield sn-glycerol 3-phosphate. The polypeptide is Glycerol kinase (Pseudomonas fluorescens (strain ATCC BAA-477 / NRRL B-23932 / Pf-5)).